The chain runs to 537 residues: ATP synthase subunit alpha (537 aa).

An ATP-binding site is contributed by 171–178 (GDRQTGKT).

This sequence belongs to the ATPase alpha/beta chains family. In terms of assembly, F-type ATPases have 2 components, CF(1) - the catalytic core - and CF(0) - the membrane proton channel. CF(1) has five subunits: alpha(3), beta(3), gamma(1), delta(1), epsilon(1). CF(0) has four main subunits: a, b, b' and c.

The protein resides in the cell inner membrane. It carries out the reaction ATP + H2O + 4 H(+)(in) = ADP + phosphate + 5 H(+)(out). Its function is as follows. Produces ATP from ADP in the presence of a proton gradient across the membrane. The alpha chain is a regulatory subunit. The polypeptide is ATP synthase subunit alpha (Chloroherpeton thalassium (strain ATCC 35110 / GB-78)).